A 425-amino-acid polypeptide reads, in one-letter code: Phosphoribosylamine--glycine ligase (425 aa).

The ATP-grasp domain occupies 107 to 312 (KDLCARYNIP…LLVLLNAAVD (206 aa)). 133–193 (VDQTGAPIVI…EEFMTGEEAS (61 aa)) lines the ATP pocket. Residues 214–233 (RVGDGDVGPNTGGMGAYSPA) form a disordered region. The Mg(2+) site is built by Glu-282 and Asn-284.

It belongs to the GARS family. The cofactor is Mg(2+). Requires Mn(2+) as cofactor.

The enzyme catalyses 5-phospho-beta-D-ribosylamine + glycine + ATP = N(1)-(5-phospho-beta-D-ribosyl)glycinamide + ADP + phosphate + H(+). It participates in purine metabolism; IMP biosynthesis via de novo pathway; N(1)-(5-phospho-D-ribosyl)glycinamide from 5-phospho-alpha-D-ribose 1-diphosphate: step 2/2. This Mesorhizobium japonicum (strain LMG 29417 / CECT 9101 / MAFF 303099) (Mesorhizobium loti (strain MAFF 303099)) protein is Phosphoribosylamine--glycine ligase.